The primary structure comprises 101 residues: Small ribosomal subunit protein bS18c (101 aa).

A compositionally biased stretch (basic residues) spans 1–19 (MNKSKRPFTKSKRSFRRRL). Residues 1 to 23 (MNKSKRPFTKSKRSFRRRLPPIQ) are disordered.

Belongs to the bacterial ribosomal protein bS18 family. In terms of assembly, part of the 30S ribosomal subunit.

The protein resides in the plastid. It is found in the chloroplast. This chain is Small ribosomal subunit protein bS18c, found in Lobularia maritima (Sweet alyssum).